Reading from the N-terminus, the 524-residue chain is MGKPARKGCDSKRFLKNNWLLLSTVVAVVLGIVIGVLVREYSNLSTLDKFYFAFPGEILMRMLKLVILPLIVSSMITGVAALDSNVSGKIGLRAVLYYFCTTIIAVILGIVLVVSIKPGVTQKVDEIDRTGSTPEVSTVDAMLDLIRNMFPENLVQACFQQYKTTREEVTASDDTGKNGTEESVTAVMTTAVSENRTKEYRVVGLYSDGINVLGLIVFCLVFGLVIGKMGEKGQILVDFFNALSDATMKIVQIIMCYMPLGILFLIAGKIIEVEDWEIFRKLGLYMVTVLSGLAIHSIVILPLIYFIVVRKNPFRFAMGMTQALLTALMISSSSATLPVTFRCAEEKNRVDKRITRFVLPVGATINMDGTALYEAVAAVFIAQLNDMDLSIGQIITISVTATAASIGAAGVPQAGLVTMVIVLSAVGLPAEDVTLIIAVDWLLDRFRTVVNVLGDAFGTGIVEKLSKKELEQMDVSSEVNIVNPFALESATLDNEDSDTKKSYINGGFAVDKSDTISFTQTSQF.

Residues methionine 1–asparagine 18 lie on the Cytoplasmic side of the membrane. The chain crosses the membrane as a helical span at residues tryptophan 19 to valine 38. Topologically, residues arginine 39–arginine 61 are extracellular. Residue asparagine 43 is glycosylated (N-linked (GlcNAc...) asparagine). Residues methionine 62–leucine 82 traverse the membrane as a helical segment. The Cytoplasmic portion of the chain corresponds to aspartate 83 to arginine 93. The helical transmembrane segment at alanine 94–valine 114 threads the bilayer. Residues tyrosine 98, threonine 101, and threonine 102 each coordinate Na(+). At serine 115–leucine 205 the chain is on the extracellular side. Residues asparagine 178 and asparagine 195 are each glycosylated (N-linked (GlcNAc...) asparagine). The helical transmembrane segment at tyrosine 206–methionine 229 threads the bilayer. The Cytoplasmic segment spans residues glycine 230–aspartate 238. Residues phenylalanine 239–isoleucine 266 form a helical membrane-spanning segment. Residues alanine 267–methionine 286 are Extracellular-facing. Residues valine 287 to valine 308 traverse the membrane as a helical segment. Residues valine 309–proline 313 lie on the Cytoplasmic side of the membrane. Positions phenylalanine 314–alanine 344 form an intramembrane region, discontinuously helical. L-aspartate contacts are provided by serine 331 and serine 333. Topologically, residues glutamate 345 to arginine 353 are cytoplasmic. The chain crosses the membrane as a helical span at residues isoleucine 354–phenylalanine 380. Residues glycine 362, threonine 364, asparagine 366, and aspartate 368 each contribute to the Na(+) site. Threonine 370 contributes to the L-aspartate binding site. The Extracellular segment spans residues isoleucine 381–glutamine 393. An intramembrane region (discontinuously helical) is located at residues isoleucine 394 to glycine 427. 3 residues coordinate Na(+): serine 405, isoleucine 406, and alanine 408. Valine 411 serves as a coordination point for L-aspartate. Over leucine 428–aspartate 440 the chain is Extracellular. The chain crosses the membrane as a helical span at residues tryptophan 441–valine 462. Arginine 447, threonine 448, and asparagine 451 together coordinate L-aspartate. Na(+) is bound by residues asparagine 451 and aspartate 455. The Cytoplasmic portion of the chain corresponds to glutamate 463–phenylalanine 524. Serine 517 and serine 522 each carry phosphoserine.

The protein belongs to the dicarboxylate/amino acid:cation symporter (DAACS) (TC 2.A.23) family. SLC1A1 subfamily. In terms of assembly, homotrimer. Interacts with ARL6IP5. Interacts with RTN2 (via N-terminus); the interaction promotes cell surface expression of SLC1A1. Interacts with SORCS2; this interaction is important for normal expression at the cell membrane. Brain, but also small intestine, kidney, liver and heart.

It is found in the cell membrane. The protein resides in the apical cell membrane. Its subcellular location is the synapse. It localises to the synaptosome. The protein localises to the early endosome membrane. It is found in the late endosome membrane. The protein resides in the recycling endosome membrane. It carries out the reaction K(+)(in) + L-glutamate(out) + 3 Na(+)(out) + H(+)(out) = K(+)(out) + L-glutamate(in) + 3 Na(+)(in) + H(+)(in). It catalyses the reaction K(+)(in) + L-aspartate(out) + 3 Na(+)(out) + H(+)(out) = K(+)(out) + L-aspartate(in) + 3 Na(+)(in) + H(+)(in). The catalysed reaction is D-aspartate(out) + K(+)(in) + 3 Na(+)(out) + H(+)(out) = D-aspartate(in) + K(+)(out) + 3 Na(+)(in) + H(+)(in). The enzyme catalyses K(+)(in) + L-cysteine(out) + 3 Na(+)(out) + H(+)(out) = K(+)(out) + L-cysteine(in) + 3 Na(+)(in) + H(+)(in). Sodium-dependent, high-affinity amino acid transporter that mediates the uptake of L-glutamate and also L-aspartate and D-aspartate. Can also transport L-cysteine. Functions as a symporter that transports one amino acid molecule together with two or three Na(+) ions and one proton, in parallel with the counter-transport of one K(+) ion. Mediates Cl(-) flux that is not coupled to amino acid transport; this avoids the accumulation of negative charges due to aspartate and Na(+) symport. Plays an important role in L-glutamate and L-aspartate reabsorption in renal tubuli. Plays a redundant role in the rapid removal of released glutamate from the synaptic cleft, which is essential for terminating the postsynaptic action of glutamate. Contributes to glutathione biosynthesis and protection against oxidative stress via its role in L-glutamate and L-cysteine transport. Negatively regulated by ARL6IP5. The protein is Excitatory amino acid transporter 3 (SLC1A1) of Oryctolagus cuniculus (Rabbit).